A 105-amino-acid chain; its full sequence is Large ribosomal subunit protein uL24 (105 aa).

The protein belongs to the universal ribosomal protein uL24 family. Part of the 50S ribosomal subunit.

One of two assembly initiator proteins, it binds directly to the 5'-end of the 23S rRNA, where it nucleates assembly of the 50S subunit. Functionally, one of the proteins that surrounds the polypeptide exit tunnel on the outside of the subunit. The polypeptide is Large ribosomal subunit protein uL24 (Vibrio vulnificus (strain YJ016)).